Reading from the N-terminus, the 84-residue chain is SPbeta prophage-derived uncharacterized protein YomY (84 aa).

In Bacillus subtilis (strain 168), this protein is SPbeta prophage-derived uncharacterized protein YomY (yomY).